The following is a 178-amino-acid chain: Deoxyuridine 5'-triphosphate nucleotidohydrolase (178 aa).

The protein belongs to the dUTPase family. Requires Mg(2+) as cofactor.

The catalysed reaction is dUTP + H2O = dUMP + diphosphate + H(+). It participates in pyrimidine metabolism; dUMP biosynthesis; dUMP from dCTP (dUTP route): step 2/2. In terms of biological role, this enzyme is involved in nucleotide metabolism: it produces dUMP, the immediate precursor of thymidine nucleotides and it decreases the intracellular concentration of dUTP so that uracil cannot be incorporated into DNA. This is Deoxyuridine 5'-triphosphate nucleotidohydrolase from Fowl adenovirus A serotype 1 (strain CELO / Phelps) (FAdV-1).